Here is a 242-residue protein sequence, read N- to C-terminus: uncharacterized protein (242 aa).

The 61-residue stretch at 2–62 folds into the S4 RNA-binding domain; it reads EKAYKLLSVQ…VEKPSVIFED (61 aa). D93 is a catalytic residue.

Belongs to the pseudouridine synthase RluA family.

It carries out the reaction a uridine in RNA = a pseudouridine in RNA. This is an uncharacterized protein from Helicobacter pylori (strain J99 / ATCC 700824) (Campylobacter pylori J99).